The primary structure comprises 221 residues: Placenta growth factor (221 aa).

A signal peptide spans 1 to 18 (MPVMRLFPCFLQLLAGLA). N-linked (GlcNAc...) asparagine glycosylation is present at N33. Intrachain disulfides connect C52/C94, C83/C128, and C87/C130. N101 carries N-linked (GlcNAc...) asparagine glycosylation. The segment at 175–221 (QSAVWPSSPVPEEIPRMHPGRNGKKQQRKPLREKMKPERCGDAVPRR) is disordered. Positions 192-203 (HPGRNGKKQQRK) are enriched in basic residues. The interval 193–213 (PGRNGKKQQRKPLREKMKPER) is heparin-binding. Over residues 204 to 221 (PLREKMKPERCGDAVPRR) the composition is skewed to basic and acidic residues.

Belongs to the PDGF/VEGF growth factor family. As to quaternary structure, antiparallel homodimer; disulfide-linked. Also found as heterodimer with VEGFA/VEGF. Isoform PlGF-3 is found both as homodimer and as monomer. N-glycosylated. In terms of tissue distribution, while the three isoforms are present in most placental tissues, PlGF-2 is specific to early (8 week) placenta and only PlGF-1 is found in the colon and mammary carcinomas.

Its subcellular location is the secreted. In terms of biological role, growth factor active in angiogenesis and endothelial cell growth, stimulating their proliferation and migration. It binds to the receptor FLT1/VEGFR-1. Isoform PlGF-2 binds NRP1/neuropilin-1 and NRP2/neuropilin-2 in a heparin-dependent manner. Also promotes cell tumor growth. This is Placenta growth factor (PGF) from Homo sapiens (Human).